The chain runs to 2211 residues: Nonribosomal peptide synthetase 13 (2211 aa).

The adenylation 1 stretch occupies residues 76-475 (TYAELDSLSD…IEHHLQLTLP (400 aa)). Residues 594 to 671 (PPSTPKEATI…EQSKRAGLIQ (78 aa)) form the Carrier 1 domain. Ser-631 is modified (O-(pantetheine 4'-phosphoryl)serine). Residues 710–975 (EDIYPCTALQ…IATVPTRIRV (266 aa)) are condensation 1. Residues 1169–1563 (TYRELWAHSS…LGAVEASVMR (395 aa)) form an adenylation 2 region. Positions 1677–1756 (PMSDDNERRL…RSRHLITEQA (80 aa)) constitute a Carrier 2 domain. Ser-1714 bears the O-(pantetheine 4'-phosphoryl)serine mark. The segment at 1814–2069 (HFQFDLSGAV…CTNYIPYRLS (256 aa)) is condensation 2.

The protein belongs to the NRP synthetase family.

The catalysed reaction is L-proline + L-tryptophan + 2 ATP = brevianamide F + 2 AMP + 2 diphosphate + 2 H(+). Its pathway is mycotoxin biosynthesis. Its function is as follows. Nonribosomal peptide synthetase; part of the gene cluster that mediates the biosynthesis of fumitremorgins, indole alkaloids that carry not only intriguing chemical structures, but also interesting biological and pharmacological activities. The biosynthesis of fumitremorgin-type alkaloids begins by condensation of the two amino acids L-tryptophan and L-proline to brevianamide F, catalyzed by the non-ribosomal peptide synthetase ftmA. Brevianamide F is then prenylated by the prenyltransferase ftmPT1/ftmB in the presence of dimethylallyl diphosphate, resulting in the formation of tryprostatin B. The three cytochrome P450 monooxygenases, ftmP450-1/ftmC, ftmP450-2/ftmE and ftmP450-3/FtmG, are responsible for the conversion of tryprostatin B to 6-hydroxytryprostatin B, tryprostatin A to fumitremorgin C and fumitremorgin C to 12,13-dihydroxyfumitremorgin C, respectively. The putative methyltransferase ftmMT/ftmD is expected for the conversion of 6-hydroxytryprostatin B to tryprostatin A. FtmPT2/FtmH catalyzes the prenylation of 12,13-dihydroxyfumitre-morgin C in the presence of dimethylallyl diphosphate, resulting in the formation of fumitremorgin B. Fumitremorgin B is further converted to verruculogen by ftmOx1/ftmF via the insertion of an endoperoxide bond between the two prenyl moieties. In some fungal species, verruculogen is further converted to fumitremorgin A, but the enzymes involved in this step have not been identified yet. The sequence is that of Nonribosomal peptide synthetase 13 from Aspergillus fumigatus (strain ATCC MYA-4609 / CBS 101355 / FGSC A1100 / Af293) (Neosartorya fumigata).